The following is a 169-amino-acid chain: Ribosome maturation factor RimM (169 aa).

The PRC barrel domain maps to 97–169 (NDEAYFTDLI…KIVVDWEYDY (73 aa)).

The protein belongs to the RimM family. As to quaternary structure, binds ribosomal protein uS19.

The protein localises to the cytoplasm. In terms of biological role, an accessory protein needed during the final step in the assembly of 30S ribosomal subunit, possibly for assembly of the head region. Essential for efficient processing of 16S rRNA. May be needed both before and after RbfA during the maturation of 16S rRNA. It has affinity for free ribosomal 30S subunits but not for 70S ribosomes. This Francisella philomiragia subsp. philomiragia (strain ATCC 25017 / CCUG 19701 / FSC 153 / O#319-036) protein is Ribosome maturation factor RimM.